Reading from the N-terminus, the 261-residue chain is Histone H3-like centromeric protein cpar-1 (261 aa).

Positions 80–150 (TVGSNSTNLV…AGSSSSDRVR (71 aa)) are disordered. The segment covering 113-127 (AANSHHQSPINVGNR) has biased composition (polar residues). The span at 132–146 (GTNGRNGSRAGSSSS) shows a compositional bias: low complexity. Residues 164-261 (YRPGQKALEE…LYRRLCLPNL (98 aa)) form an H3-like region.

It belongs to the histone H3 family. As to quaternary structure, forms a nucleosome-like histone octamer containing two molecules each of H2A, H2B, cpar-1 and H4 assembled in one cpar-1-H4 heterotetramer and two H2A-H2B heterodimers. Post-translationally, cleaved at the onset of meiotic anaphase I, likely by separase sep-1.

It localises to the nucleus. Its subcellular location is the chromosome. Histone H3-like variant which exclusively replaces conventional H3 in the nucleosome core of centromeric chromatin at the inner plate of the kinetochore. Required for recruitment and assembly of kinetochore proteins, mitotic progression and chromosome segregation. May serve as an epigenetic mark that propagates centromere identity through replication and cell division. Not required for chromosome segregation during meiosis. The chain is Histone H3-like centromeric protein cpar-1 from Caenorhabditis elegans.